The primary structure comprises 119 residues: Holo-[acyl-carrier-protein] synthase (119 aa).

The Mg(2+) site is built by D5 and E51.

It belongs to the P-Pant transferase superfamily. AcpS family. The cofactor is Mg(2+).

Its subcellular location is the cytoplasm. It carries out the reaction apo-[ACP] + CoA = holo-[ACP] + adenosine 3',5'-bisphosphate + H(+). In terms of biological role, transfers the 4'-phosphopantetheine moiety from coenzyme A to a Ser of acyl-carrier-protein. The chain is Holo-[acyl-carrier-protein] synthase from Helicobacter pylori (strain HPAG1).